Reading from the N-terminus, the 1002-residue chain is Isoleucine--tRNA ligase (1002 aa).

The 'HIGH' region motif lies at Pro70 to His80. An L-isoleucyl-5'-AMP-binding site is contributed by Glu630. The short motif at Lys671 to Ser675 is the 'KMSKS' region element. Lys674 contacts ATP.

The protein belongs to the class-I aminoacyl-tRNA synthetase family. IleS type 1 subfamily. In terms of assembly, monomer.

Its subcellular location is the cytoplasm. It carries out the reaction tRNA(Ile) + L-isoleucine + ATP = L-isoleucyl-tRNA(Ile) + AMP + diphosphate. Functionally, catalyzes the attachment of isoleucine to tRNA(Ile). As IleRS can inadvertently accommodate and process structurally similar amino acids such as valine, to avoid such errors it has two additional distinct tRNA(Ile)-dependent editing activities. One activity is designated as 'pretransfer' editing and involves the hydrolysis of activated Val-AMP. The other activity is designated 'posttransfer' editing and involves deacylation of mischarged Val-tRNA(Ile). The sequence is that of Isoleucine--tRNA ligase from Bradyrhizobium diazoefficiens (strain JCM 10833 / BCRC 13528 / IAM 13628 / NBRC 14792 / USDA 110).